The following is a 275-amino-acid chain: uncharacterized protein (275 aa).

Helical transmembrane passes span 25-45 (LGYF…FMTA), 70-90 (LLFF…LSAI), 107-127 (IGNF…LRFV), 149-169 (FGQW…IVQF), 203-223 (IARA…AMTA), and 247-267 (ILSI…MKGI).

The protein localises to the cell membrane. This is an uncharacterized protein from Bacillus subtilis (strain 168).